Reading from the N-terminus, the 307-residue chain is Ribosomal RNA small subunit methyltransferase H (307 aa).

Residues 38–40, aspartate 58, phenylalanine 82, aspartate 99, and glutamine 106 each bind S-adenosyl-L-methionine; that span reads GGH.

It belongs to the methyltransferase superfamily. RsmH family.

The protein localises to the cytoplasm. The catalysed reaction is cytidine(1402) in 16S rRNA + S-adenosyl-L-methionine = N(4)-methylcytidine(1402) in 16S rRNA + S-adenosyl-L-homocysteine + H(+). Its function is as follows. Specifically methylates the N4 position of cytidine in position 1402 (C1402) of 16S rRNA. The polypeptide is Ribosomal RNA small subunit methyltransferase H (Variovorax paradoxus (strain S110)).